Reading from the N-terminus, the 227-residue chain is tRNA (guanine-N(1)-)-methyltransferase (227 aa).

S-adenosyl-L-methionine contacts are provided by residues glycine 112 and 132 to 137 (IGDFIL).

This sequence belongs to the RNA methyltransferase TrmD family. In terms of assembly, homodimer.

The protein localises to the cytoplasm. It carries out the reaction guanosine(37) in tRNA + S-adenosyl-L-methionine = N(1)-methylguanosine(37) in tRNA + S-adenosyl-L-homocysteine + H(+). Specifically methylates guanosine-37 in various tRNAs. This is tRNA (guanine-N(1)-)-methyltransferase from Sulfurovum sp. (strain NBC37-1).